A 1085-amino-acid chain; its full sequence is DNA-directed RNA polymerase subunit beta (1085 aa).

The protein belongs to the RNA polymerase beta chain family. As to quaternary structure, in plastids the minimal PEP RNA polymerase catalytic core is composed of four subunits: alpha, beta, beta', and beta''. When a (nuclear-encoded) sigma factor is associated with the core the holoenzyme is formed, which can initiate transcription.

The protein resides in the plastid. It localises to the chloroplast. The catalysed reaction is RNA(n) + a ribonucleoside 5'-triphosphate = RNA(n+1) + diphosphate. DNA-dependent RNA polymerase catalyzes the transcription of DNA into RNA using the four ribonucleoside triphosphates as substrates. This is DNA-directed RNA polymerase subunit beta from Physcomitrium patens (Spreading-leaved earth moss).